Here is a 722-residue protein sequence, read N- to C-terminus: Pesticidal crystal protein Cry22Aa (722 aa).

Promotes colloidosmotic lysis by binding to the midgut epithelial cells of hymenopteran species. This is Pesticidal crystal protein Cry22Aa (cry22Aa) from Bacillus thuringiensis.